Here is a 347-residue protein sequence, read N- to C-terminus: MGGTAVGGVIGVRCGVPAVLLCLGALLCANVLLYFYLDALYQNTNPPSAHTQCPPRHFKVGTMSSCSPWLKCPEIRSGVRRVKLIGQGAVKKVYLSEWQGQKVALSVLSSDQYADDFLHGLSMLRALQSSHVVTLVGVCEEDAVFVTEYHPLGSVLTLDTTLAQERYRWRNSWHTRLQLAIDYVAFLAYLHSSPAGIRVMCDSNDLHKTLSQFLLASDMRLLANDLDALPEVEKGGLGVKCGHHELTGDFVAPEQLWPYGEDFSFSDEAMPGYDEKTDIWKIPDVTRFLLGDVLGGDVIHFHLFQIYSECKRKEAHMRPTAREVLSVYRSVYDSMMESQSQRVRDML.

At 1 to 14 (MGGTAVGGVIGVRC) the chain is on the cytoplasmic side. The chain crosses the membrane as a helical; Signal-anchor for type II membrane protein span at residues 15-35 (GVPAVLLCLGALLCANVLLYF). The Lumenal segment spans residues 36-347 (YLDALYQNTN…SQSQRVRDML (312 aa)). A Protein kinase domain is found at 79 to 347 (VRRVKLIGQG…SQSQRVRDML (269 aa)).

Belongs to the protein kinase superfamily. Ser/Thr protein kinase family. STKL subfamily.

The protein localises to the endoplasmic reticulum membrane. It carries out the reaction 3-O-[beta-D-GalNAc-(1-&gt;3)-beta-D-GlcNAc-(1-&gt;4)-alpha-D-Man]-L-Thr-[protein] + ATP = 3-O-[beta-D-GalNAc-(1-&gt;3)-beta-D-GlcNAc-(1-&gt;4)-(O-6-P-alpha-D-Man)]-Thr-[protein] + ADP + H(+). Functionally, protein O-mannose kinase that specifically mediates phosphorylation at the 6-position of an O-mannose of the trisaccharide (N-acetylgalactosamine (GalNAc)-beta-1,3-N-acetylglucosamine (GlcNAc)-beta-1,4-mannose) to generate phosphorylated O-mannosyl trisaccharide (N-acetylgalactosamine-beta-1,3-N-acetylglucosamine-beta-1,4-(phosphate-6-)mannose). Phosphorylated O-mannosyl trisaccharide is a carbohydrate structure present in alpha-dystroglycan (dag1), which is required for binding laminin G-like domain-containing extracellular proteins with high affinity. Only shows kinase activity when the GalNAc-beta-3-GlcNAc-beta-terminus is linked to the 4-position of O-mannose, suggesting that this disaccharide serves as the substrate recognition motif. In Danio rerio (Zebrafish), this protein is Protein O-mannose kinase (pomk).